We begin with the raw amino-acid sequence, 608 residues long: Albumin (608 aa).

The N-terminal stretch at 1–18 is a signal peptide; sequence MKWVTFLLLLFVSDSAFS. Positions 19 to 24 are excised as a propeptide; it reads RGLFRR. Albumin domains lie at 19 to 211, 212 to 403, and 404 to 601; these read RGLF…ALKE, KALA…EFQP, and LVEE…KLVA. His-27 serves as a coordination point for Cu cation. Ser-29 carries the post-translational modification Phosphoserine. Residues Glu-30 and Asp-37 each coordinate Ca(2+). A disulfide bond links Cys-77 and Cys-86. A phosphoserine mark is found at Ser-82 and Ser-89. His-91 provides a ligand contact to Zn(2+). 6 disulfides stabilise this stretch: Cys-99–Cys-115, Cys-114–Cys-125, Cys-148–Cys-193, Cys-192–Cys-201, Cys-224–Cys-270, and Cys-269–Cys-277. Position 268 (Glu-268) interacts with Ca(2+). Positions 271 and 273 each coordinate Zn(2+). Positions 273, 276, and 279 each coordinate Ca(2+). Disulfide bonds link Cys-289–Cys-303, Cys-302–Cys-313, Cys-340–Cys-385, Cys-384–Cys-393, Cys-416–Cys-462, Cys-461–Cys-472, Cys-485–Cys-501, and Cys-500–Cys-511. The residue at position 297 (Ser-297) is a Phosphoserine. The residue at position 443 (Ser-443) is a Phosphoserine. Thr-444 and Thr-446 each carry phosphothreonine. The residue at position 460 (Lys-460) is an N6-succinyllysine. The residue at position 513 (Ser-513) is a Phosphoserine. Disulfide bonds link Cys-538-Cys-583 and Cys-582-Cys-591. Lys-543 bears the N6-succinyllysine mark. At Lys-558 the chain carries N6-methyllysine. A Phosphothreonine modification is found at Thr-570. An N6-succinyllysine modification is found at Lys-588.

It belongs to the ALB/AFP/VDB family. In terms of assembly, interacts with FCGRT; this interaction regulates ALB homeostasis. Interacts with TASOR. In plasma, occurs in a covalently-linked complex with chromophore-bound alpha-1-microglobulin; this interaction does not prevent fatty acid binding to ALB. In terms of tissue distribution, plasma.

It localises to the secreted. Its function is as follows. Binds water, Ca(2+), Na(+), K(+), fatty acids, hormones, bilirubin and drugs. Its main function is the regulation of the colloidal osmotic pressure of blood. Major zinc transporter in plasma, typically binds about 80% of all plasma zinc. Major calcium and magnesium transporter in plasma, binds approximately 45% of circulating calcium and magnesium in plasma. Potentially has more than two calcium-binding sites and might additionally bind calcium in a non-specific manner. The shared binding site between zinc and calcium at residue Asp-273 suggests a crosstalk between zinc and calcium transport in the blood. The rank order of affinity is zinc &gt; calcium &gt; magnesium. Binds to the bacterial siderophore enterobactin and inhibits enterobactin-mediated iron uptake of E.coli from ferric transferrin, and may thereby limit the utilization of iron and growth of enteric bacteria such as E.coli. Does not prevent iron uptake by the bacterial siderophore aerobactin. The polypeptide is Albumin (Mesocricetus auratus (Golden hamster)).